Here is a 427-residue protein sequence, read N- to C-terminus: 3-phosphoshikimate 1-carboxyvinyltransferase (427 aa).

3 residues coordinate 3-phosphoshikimate: K23, S24, and R28. Residue K23 participates in phosphoenolpyruvate binding. Residues G97 and R125 each coordinate phosphoenolpyruvate. 7 residues coordinate 3-phosphoshikimate: S169, S170, Q171, S197, D313, N336, and K340. A phosphoenolpyruvate-binding site is contributed by Q171. Catalysis depends on D313, which acts as the Proton acceptor. The phosphoenolpyruvate site is built by R344, R386, and K411.

The protein belongs to the EPSP synthase family. Monomer.

The protein resides in the cytoplasm. The catalysed reaction is 3-phosphoshikimate + phosphoenolpyruvate = 5-O-(1-carboxyvinyl)-3-phosphoshikimate + phosphate. It participates in metabolic intermediate biosynthesis; chorismate biosynthesis; chorismate from D-erythrose 4-phosphate and phosphoenolpyruvate: step 6/7. Functionally, catalyzes the transfer of the enolpyruvyl moiety of phosphoenolpyruvate (PEP) to the 5-hydroxyl of shikimate-3-phosphate (S3P) to produce enolpyruvyl shikimate-3-phosphate and inorganic phosphate. The polypeptide is 3-phosphoshikimate 1-carboxyvinyltransferase (Yersinia ruckeri).